The sequence spans 146 residues: ATP synthase epsilon chain (146 aa).

The protein belongs to the ATPase epsilon chain family. F-type ATPases have 2 components, CF(1) - the catalytic core - and CF(0) - the membrane proton channel. CF(1) has five subunits: alpha(3), beta(3), gamma(1), delta(1), epsilon(1). CF(0) has three main subunits: a, b and c.

It is found in the cell membrane. In terms of biological role, produces ATP from ADP in the presence of a proton gradient across the membrane. The protein is ATP synthase epsilon chain of Lactobacillus helveticus (strain DPC 4571).